We begin with the raw amino-acid sequence, 306 residues long: Oligopeptide transport system permease protein OppB (306 aa).

Residues 1 to 11 (MLKFILRRCLE) lie on the Cytoplasmic side of the membrane. Residues 12–32 (AIPTLFILITISFFMMRLAPG) traverse the membrane as a helical segment. Over 33–99 (SPFTGERTLP…VASSFPVSAK (67 aa)) the chain is Periplasmic. Residues 94-293 (FPVSAKLGAA…ALTILFNAIV (200 aa)) enclose the ABC transmembrane type-1 domain. A helical transmembrane segment spans residues 100–120 (LGAAAFFLAVILGVSAGVIAA). Residues 121 to 137 (LKQNTKWDYTVMGLAMT) are Cytoplasmic-facing. A helical transmembrane segment spans residues 138 to 158 (GVVIPSFVVAPLLVMIFAIIL). The Periplasmic segment spans residues 159 to 169 (HWLPGGGWNGG). A helical transmembrane segment spans residues 170–190 (ALKFMILPMVALSLAYIASIA). At 191–229 (RITRGSMIEVLHSNFIRTARAKGLPMRRIILRHALKPAL) the chain is on the cytoplasmic side. A helical transmembrane segment spans residues 230-250 (LPVLSYMGPAFVGIITGSMVI). Residues 251–279 (ETIYGLPGIGQLFVNGALNRDYSLVLSLT) lie on the Periplasmic side of the membrane. A helical transmembrane segment spans residues 280 to 300 (ILVGALTILFNAIVDVLYAVI). Topologically, residues 301–306 (DPKIRY) are cytoplasmic.

This sequence belongs to the binding-protein-dependent transport system permease family. OppBC subfamily. As to quaternary structure, the complex is composed of two ATP-binding proteins (OppD and OppF), two transmembrane proteins (OppB and OppC) and a solute-binding protein (OppA).

The protein resides in the cell inner membrane. Part of the ABC transporter complex OppABCDF involved in the uptake of oligopeptides. Probably responsible for the translocation of the substrate across the membrane. This Shigella flexneri protein is Oligopeptide transport system permease protein OppB (oppB).